Reading from the N-terminus, the 291-residue chain is 4-diphosphocytidyl-2-C-methyl-D-erythritol kinase (291 aa).

Lys10 is an active-site residue. Pro94–Ser104 contributes to the ATP binding site. The active site involves Asp136.

The protein belongs to the GHMP kinase family. IspE subfamily.

It carries out the reaction 4-CDP-2-C-methyl-D-erythritol + ATP = 4-CDP-2-C-methyl-D-erythritol 2-phosphate + ADP + H(+). Its pathway is isoprenoid biosynthesis; isopentenyl diphosphate biosynthesis via DXP pathway; isopentenyl diphosphate from 1-deoxy-D-xylulose 5-phosphate: step 3/6. In terms of biological role, catalyzes the phosphorylation of the position 2 hydroxy group of 4-diphosphocytidyl-2C-methyl-D-erythritol. The polypeptide is 4-diphosphocytidyl-2-C-methyl-D-erythritol kinase (Listeria innocua serovar 6a (strain ATCC BAA-680 / CLIP 11262)).